Consider the following 513-residue polypeptide: GMP synthase [glutamine-hydrolyzing] (513 aa).

The Glutamine amidotransferase type-1 domain maps to 8 to 198 (KIIVLDYGSQ…ALNTCGAKGN (191 aa)). The active-site Nucleophile is C85. Active-site residues include H172 and E174. The 190-residue stretch at 199-388 (WSMENFIDMQ…LGMPDEIVWR (190 aa)) folds into the GMPS ATP-PPase domain. 226–232 (SGGVDSS) contributes to the ATP binding site.

In terms of assembly, homodimer.

It catalyses the reaction XMP + L-glutamine + ATP + H2O = GMP + L-glutamate + AMP + diphosphate + 2 H(+). It functions in the pathway purine metabolism; GMP biosynthesis; GMP from XMP (L-Gln route): step 1/1. Catalyzes the synthesis of GMP from XMP. The polypeptide is GMP synthase [glutamine-hydrolyzing] (Lactococcus lactis subsp. cremoris (strain SK11)).